A 1893-amino-acid chain; its full sequence is Nestin (1893 aa).

N-acetylmethionine is present on methionine 1. A head region spans residues 1–7; that stretch reads MEGCVGE. Positions 8–43 are coil 1A; it reads ESFQMWELNRRLEAYLTRVKTLEEQNQLLSAELGGL. Residues 8-314 enclose the IF rod domain; it reads ESFQMWELNR…TLLEAENSRL (307 aa). Positions 44 to 55 are linker 1; that stretch reads RAQSGDTSWRAR. Positions 56–151 are coil 1B; that stretch reads ADDELASLRI…AAHEEERAHL (96 aa). The tract at residues 150 to 172 is disordered; it reads HLNAQAACAPRRPPAPPHGSPVR. The interval 152 to 174 is linker 12; that stretch reads NAQAACAPRRPPAPPHGSPVRAP. The coil 2A stretch occupies residues 175 to 193; it reads EVEDLARRLGEVWRGAVRD. The tract at residues 194–196 is linker 2; it reads YQE. Positions 197–314 are coil 2B; it reads RVAHMESSLG…TLLEAENSRL (118 aa). Serine 312 is subject to Phosphoserine. A tail region spans residues 315-1893; the sequence is QTPGRGSQAS…DGDSWSSGED (1579 aa). Threonine 316 is subject to Phosphothreonine. 2 positions are modified to phosphoserine: serine 356 and serine 359. The residue at position 389 (threonine 389) is a Phosphothreonine. 3 disordered regions span residues 437-479, 507-529, and 556-879; these read PELE…SGSR, NSSAQKTQESGLDTEETQDSQGP, and KENC…NQKS. Over residues 507-517 the composition is skewed to polar residues; that stretch reads NSSAQKTQESG. Serine 562 bears the Phosphoserine mark. 2 stretches are compositionally biased toward basic and acidic residues: residues 572–595 and 606–615; these read GPEKEKQIPLKSLEEKNVESEKTL and LGKEDTRTED. The residue at position 620 (serine 620) is a Phosphoserine. 2 stretches are compositionally biased toward basic and acidic residues: residues 634-646 and 670-681; these read ESQEVVRPSKEGN and MLERLVEKEDQS. Phosphoserine is present on residues serine 685 and serine 729. Composition is skewed to basic and acidic residues over residues 717–730, 761–774, 802–818, and 846–879; these read RLIEKESQESLRSP, RLIEKESQESLRSA, ILERLIEKESQESLRSP, and MLERLIEKESQESLKSPEENQRIGKPLERENQKS. Serine 817 carries the post-translational modification Phosphoserine. A Phosphoserine modification is found at serine 903. Composition is skewed to basic and acidic residues over residues 949 to 966 and 989 to 1051; these read LLEDKTHKSLGSLEDRNG and QRIV…KSLE. The tract at residues 949-1130 is disordered; it reads LLEDKTHKSL…ARSLGKENQE (182 aa). Phosphoserine is present on residues serine 1005 and serine 1049. Residue lysine 1136 forms a Glycyl lysine isopeptide (Lys-Gly) (interchain with G-Cter in SUMO1); alternate linkage. Residue lysine 1136 forms a Glycyl lysine isopeptide (Lys-Gly) (interchain with G-Cter in SUMO2); alternate linkage. Residues serine 1145 and serine 1166 each carry the phosphoserine modification. The segment at 1155–1222 is disordered; it reads ETAEEDLERR…ELSSLGKWNV (68 aa). A compositionally biased stretch (basic and acidic residues) spans 1198–1212; that stretch reads DENRETLTSLEKESQ. A phosphoserine mark is found at serine 1216 and serine 1229. Residues 1237–1263 form a disordered region; that stretch reads EGLQEEQHQESLREVKQELPSSGNQQR. The span at 1241–1253 shows a compositional bias: basic and acidic residues; the sequence is EEQHQESLREVKQ. Residue serine 1322 is modified to Phosphoserine. 2 disordered regions span residues 1336-1369 and 1388-1824; these read DNLEGGALEVPVAQSMPEVTERDEDRAQAGEQDS and EVVG…SEQV. Basic and acidic residues-rich tracts occupy residues 1354-1363 and 1393-1403; these read VTERDEDRAQ and EDPRHFAREEA. Composition is skewed to acidic residues over residues 1458 to 1469 and 1561 to 1576; these read ESMEGWEEEEAS and QDWEEGREESEADDLG. A phosphoserine mark is found at serine 1570, serine 1594, serine 1686, serine 1695, serine 1772, and serine 1774. The segment covering 1688–1709 has biased composition (acidic residues); sequence GFADEEESGEEGEEEDADEEGA. A compositionally biased stretch (acidic residues) spans 1773–1788; the sequence is GSEESESASLEGEEGQ. Positions 1815-1824 are enriched in polar residues; that stretch reads QSPNLDSEQV. Phosphoserine occurs at positions 1866, 1889, and 1890. The interval 1870 to 1893 is disordered; the sequence is LGPSQPLKFTLSGVDGDSWSSGED.

This sequence belongs to the intermediate filament family. In terms of assembly, forms homodimers and homotetramers in vitro. In mixtures with other intermediate filament proteins such as vimentin and alpha-internexin, this protein preferentially forms heterodimers which can assemble to form intermediate filaments if nestin does not exceed 25%. Interacts with FHOD3. Post-translationally, constitutively phosphorylated. This increases during mitosis when the cytoplasmic intermediate filament network is reorganized. As to expression, CNS stem cells.

In terms of biological role, required for brain and eye development. Promotes the disassembly of phosphorylated vimentin intermediate filaments (IF) during mitosis and may play a role in the trafficking and distribution of IF proteins and other cellular factors to daughter cells during progenitor cell division. Required for survival, renewal and mitogen-stimulated proliferation of neural progenitor cells. This is Nestin (Nes) from Rattus norvegicus (Rat).